The following is a 159-amino-acid chain: U1 small nuclear ribonucleoprotein C (159 aa).

The Matrin-type zinc finger occupies 4–36 (FYCDYCDTYLTHDSPSVRKTHCSGRKHKENVKD). Disordered stretches follow at residues 63-95 (PPTP…MPAP) and 139-159 (MRPP…RPDR). Pro residues predominate over residues 77–95 (IPPPPSLGGPPRPGMMPAP).

It belongs to the U1 small nuclear ribonucleoprotein C family. In terms of assembly, component of the U1 snRNP. The U1 snRNP is composed of the U1 snRNA and the 7 core Sm proteins snrpb, snrpd1, snrpd2, snrpd3, snrpe, snrpf and snrpg that assemble in a heptameric protein ring on the Sm site of the small nuclear RNA to form the core snRNP, and at least 3 U1 snRNP-specific proteins snrnp70/U1-70K, snrpa/U1-A and snrpc/U1-C. snrpc/U1-C interacts with U1 snRNA and the 5' splice-site region of the pre-mRNA.

It localises to the nucleus. Functionally, component of the spliceosomal U1 snRNP, which is essential for recognition of the pre-mRNA 5' splice-site and the subsequent assembly of the spliceosome. SNRPC/U1-C is directly involved in initial 5' splice-site recognition for both constitutive and regulated alternative splicing. The interaction with the 5' splice-site seems to precede base-pairing between the pre-mRNA and the U1 snRNA. Stimulates commitment or early (E) complex formation by stabilizing the base pairing of the 5' end of the U1 snRNA and the 5' splice-site region. The protein is U1 small nuclear ribonucleoprotein C of Xenopus laevis (African clawed frog).